The chain runs to 211 residues: Small ribosomal subunit protein uS3 (211 aa).

The region spanning 38-106 (LRNFLKKRLY…EIYLNIQEVR (69 aa)) is the KH type-2 domain.

Belongs to the universal ribosomal protein uS3 family. As to quaternary structure, part of the 30S ribosomal subunit. Forms a tight complex with proteins S10 and S14.

Binds the lower part of the 30S subunit head. Binds mRNA in the 70S ribosome, positioning it for translation. The sequence is that of Small ribosomal subunit protein uS3 from Geobacter sulfurreducens (strain ATCC 51573 / DSM 12127 / PCA).